Consider the following 488-residue polypeptide: Teichuronic acid biosynthesis protein TuaE (488 aa).

Transmembrane regions (helical) follow at residues 7-29, 35-57, 64-86, 91-110, 122-144, 154-173, 180-202, 222-244, 257-274, 279-298, 303-322, 354-376, 397-419, and 459-476; these read AVHT…GAIH, MQMA…ATAF, FMAV…AIHL, LFLY…FGMV, LQVK…SLLW, YLAL…MYVQ, IVYA…NHIT, PTSV…FFYI, AIGL…FATG, LLGI…PPVL, IWLS…SKIY, NAWH…SYYL, ILAN…LIWV, and LFFH…VNVL.

The protein resides in the cell membrane. It functions in the pathway cell wall biogenesis; teichuronic acid biosynthesis. Might be involved in the polymerization of teichuronic acid repeating units after their translocation to the outer surface of the membrane. This is Teichuronic acid biosynthesis protein TuaE (tuaE) from Bacillus subtilis (strain 168).